The following is an 87-amino-acid chain: Omega-lycotoxin-Am1b (87 aa).

A signal peptide spans 1–17 (MKLSIFFVLFFIAIAYC). Positions 18–40 (QPEFLDDEEDEVEETLPVAEEGR) are excised as a propeptide. Cystine bridges form between Cys44–Cys59, Cys51–Cys64, Cys58–Cys84, and Cys66–Cys82.

Belongs to the neurotoxin omega-lctx family. Expressed by the venom gland.

It is found in the secreted. In terms of biological role, modulates Cav2.1/CACNA1A voltage-gated calcium channels (P/Q-type currents) in rat cerebellar Purkinje cells and hippocampal CA1-CA3 neurons. At saturating concentrations (&gt;10 nM) decelerates activation kinetics and slightly increases peak amplitude without affecting deactivation kinetics. In vivo, does not cause death when intravenously injected into mice. In rat models, through its activity on Cav2.1/CACNA1A, has an ameliorative effect on memory defects provoked by hyperstimulation of N-methyl-D-aspartate receptors (NMDARs) in the hippocampus. The protein is Omega-lycotoxin-Am1b of Alopecosa marikovskyi (Wolf spider).